The primary structure comprises 565 residues: Liver carboxylesterase 1 (565 aa).

The signal sequence occupies residues 1 to 18 (MWLCALSLISLTACLSLG). Cysteines 87 and 116 form a disulfide. S221 functions as the Acyl-ester intermediate in the catalytic mechanism. A disulfide bridge links C273 with C284. Residue E353 is the Charge relay system of the active site. At S378 the chain carries Phosphoserine. A glycan (N-linked (GlcNAc...) asparagine) is linked at N388. The active-site Charge relay system is H466. The N-linked (GlcNAc...) asparagine glycan is linked to N489.

The protein belongs to the type-B carboxylesterase/lipase family. As to quaternary structure, homotrimer and homohexamer. Binds to beta-glucuronidase. In terms of tissue distribution, detected in kidney, liver and lung.

Its subcellular location is the endoplasmic reticulum lumen. The protein localises to the cytoplasm. It is found in the lipid droplet. The catalysed reaction is a carboxylic ester + H2O = an alcohol + a carboxylate + H(+). It catalyses the reaction cholesteryl (9Z-octadecenoate) + H2O = cholesterol + (9Z)-octadecenoate + H(+). It carries out the reaction 2-(5Z,8Z,11Z,14Z-eicosatetraenoyl)-glycerol + H2O = glycerol + (5Z,8Z,11Z,14Z)-eicosatetraenoate + H(+). The enzyme catalyses prostaglandin E2 1-glyceryl ester + H2O = prostaglandin E2 + glycerol + H(+). The catalysed reaction is a cholesterol ester + H2O = cholesterol + a fatty acid + H(+). It catalyses the reaction prostaglandin F2alpha 1-glyceryl ester + H2O = prostaglandin F2alpha + glycerol + H(+). Its function is as follows. Involved in the detoxification of xenobiotics and in the activation of ester and amide prodrugs. Hydrolyzes aromatic and aliphatic esters, but has no catalytic activity toward amides or a fatty acyl-CoA ester. Displays fatty acid ethyl ester synthase activity, catalyzing the ethyl esterification of oleic acid to ethyloleate. Converts monoacylglycerides to free fatty acids and glycerol. Hydrolyzes of 2-arachidonoylglycerol and prostaglandins. Hydrolyzes cellular cholesteryl esters to free cholesterols and promotes reverse cholesterol transport (RCT) by facilitating both the initial and final steps in the process. First of all, allows free cholesterol efflux from macrophages to extracellular cholesterol acceptors and secondly, releases free cholesterol from lipoprotein-delivered cholesteryl esters in the liver for bile acid synthesis or direct secretion into the bile. This is Liver carboxylesterase 1 from Mus musculus (Mouse).